The chain runs to 109 residues: Mitochondrial pyruvate carrier 1 (109 aa).

Ala2 is modified (N-acetylalanine). The Mitochondrial matrix segment spans residues 2–20 (AGALVRKAADYVRSKDFRD). Residues 21–41 (YLMSTHFWGPVANWGLPIAAI) form a helical membrane-spanning segment. The Mother cell cytoplasmic portion of the chain corresponds to 42-52 (NDMKKSPEIIS). Residues 53-71 (GRMTFALCCYSLTFMRFAY) form a helical membrane-spanning segment. Position 72 is an N6-acetyllysine (Lys72). Over 72-109 (KVQPRNWLLFACHATNEVAQLIQGGRLIRHEMSKKASA) the chain is Mitochondrial matrix.

As to quaternary structure, homodimer. Forms heterodimer with MPC2. The heterodimer is the more stable and dominant form.

Its subcellular location is the mitochondrion inner membrane. It carries out the reaction pyruvate(out) + H(+)(out) = pyruvate(in) + H(+)(in). Mediates the uptake of pyruvate into mitochondria. The polypeptide is Mitochondrial pyruvate carrier 1 (MPC1) (Bos taurus (Bovine)).